The sequence spans 122 residues: uncharacterized protein (122 aa).

Residues 79–90 (NERVTSRVTNSR) are compositionally biased toward polar residues. Positions 79–122 (NERVTSRVTNSRTESESNGNGNATGNTSSNANSNGNANGIYIRK) are disordered. Over residues 94–122 (ESNGNGNATGNTSSNANSNGNANGIYIRK) the composition is skewed to low complexity.

This is an uncharacterized protein from Leptolyngbya boryana (Plectonema boryanum).